The sequence spans 255 residues: uncharacterized protein (255 aa).

The protein belongs to the methyltransferase superfamily.

This is an uncharacterized protein from Mycobacterium ulcerans (strain Agy99).